We begin with the raw amino-acid sequence, 858 residues long: Low-density lipoprotein receptor-related protein 12 (858 aa).

The signal sequence occupies residues 1-32 (MARRWSTKESQRRGSAWLLLFLAGVYGNGALA). Residues 33–492 (ELSENVHISG…ENCPVIVPTR (460 aa)) are Extracellular-facing. Disulfide bonds link C47-C76, C103-C122, C166-C178, C173-C191, C185-C200, C215-C232, C222-C245, C239-C254, and C259-C285. The region spanning 47–159 (CGESPEQIRA…KGFRLAYFSG (113 aa)) is the CUB 1 domain. An N-linked (GlcNAc...) asparagine glycan is attached at N75. LDL-receptor class A domains are found at residues 165 to 201 (DCAC…EVCA) and 214 to 255 (PCAY…IDCD). Residues 259–372 (CGQWLKYFYG…RGFNATYQVD (114 aa)) form the CUB 2 domain. N-linked (GlcNAc...) asparagine glycosylation is found at N284 and N366. LDL-receptor class A domains are found at residues 374–411 (FCLP…INCT), 412–449 (MCQK…KNCF), and 450–486 (FCQP…ENCP). Disulfide bonds link C375–C388, C382–C401, C395–C410, C413–C426, C420–C439, C433–C448, C451–C463, C458–C476, and C470–C485. N-linked (GlcNAc...) asparagine glycosylation is present at N409. A glycan (N-linked (GlcNAc...) asparagine) is linked at N441. Residues 493 to 513 (VITAAVIGSLICGLLLVIALG) traverse the membrane as a helical segment. Residues 514 to 858 (CTCKLYSLRM…TSDDEALLLC (345 aa)) lie on the Cytoplasmic side of the membrane. 2 disordered regions span residues 619–721 (ALVS…VSPA) and 746–767 (SSST…SGRE). Residues 712 to 721 (SVEAPSVSPA) show a composition bias toward low complexity. The segment covering 746–755 (SSSTTQNRSP) has biased composition (polar residues).

It belongs to the LDLR family. May interact with RACK1, ZFYVE9 and NMRK2.

The protein resides in the membrane. The protein localises to the coated pit. Functionally, probable receptor, which may be involved in the internalization of lipophilic molecules and/or signal transduction. May act as a tumor suppressor. In Mus musculus (Mouse), this protein is Low-density lipoprotein receptor-related protein 12 (Lrp12).